The sequence spans 931 residues: Protocadherin gamma-B2 (931 aa).

Residues 1–30 form the signal peptide; the sequence is MKASSGRCGLVRWLQVLLPFLLSLFPGALP. 6 Cadherin domains span residues 31 to 133, 134 to 242, 243 to 347, 348 to 452, 453 to 562, and 570 to 675; these read VQIR…TPLF, KQTK…PPVF, SQDV…APEV, IVTS…APVF, QQTS…APRV, and DGSA…LPDL. The Extracellular segment spans residues 31–691; that stretch reads VQIRYSIPEE…SDPQAKLQFY (661 aa). Residues Asn419 and Asn545 are each glycosylated (N-linked (GlcNAc...) asparagine). A helical membrane pass occupies residues 692–712; it reads LVVALALISVLFFLAVILAIS. At 713–931 the chain is on the cytoplasmic side; it reads LRLRLSSRSD…KKKSGKKEKK (219 aa). Disordered stretches follow at residues 814–840 and 901–931; these read DWRFSQAQRPGTSGSQNGDDTGTWPNN and ATLTNAAGKRDGKAPAGGNGNKKKSGKKEKK. The span at 815–840 shows a compositional bias: polar residues; that stretch reads WRFSQAQRPGTSGSQNGDDTGTWPNN. The segment covering 921 to 931 has biased composition (basic residues); that stretch reads NKKKSGKKEKK.

The protein resides in the cell membrane. Functionally, potential calcium-dependent cell-adhesion protein. May be involved in the establishment and maintenance of specific neuronal connections in the brain. This is Protocadherin gamma-B2 (PCDHGB2) from Homo sapiens (Human).